The following is an 88-amino-acid chain: Cell division topological specificity factor (88 aa).

This sequence belongs to the MinE family.

In terms of biological role, prevents the cell division inhibition by proteins MinC and MinD at internal division sites while permitting inhibition at polar sites. This ensures cell division at the proper site by restricting the formation of a division septum at the midpoint of the long axis of the cell. In Paracidovorax citrulli (strain AAC00-1) (Acidovorax citrulli), this protein is Cell division topological specificity factor.